The primary structure comprises 206 residues: Small ribosomal subunit protein uS4 (206 aa).

Residues 96-156 form the S4 RNA-binding domain; sequence CRLDNVVYRM…EKSKNQLRIA (61 aa).

Belongs to the universal ribosomal protein uS4 family. As to quaternary structure, part of the 30S ribosomal subunit. Contacts protein S5. The interaction surface between S4 and S5 is involved in control of translational fidelity.

Its function is as follows. One of the primary rRNA binding proteins, it binds directly to 16S rRNA where it nucleates assembly of the body of the 30S subunit. In terms of biological role, with S5 and S12 plays an important role in translational accuracy. The polypeptide is Small ribosomal subunit protein uS4 (Pseudomonas aeruginosa (strain LESB58)).